The following is a 339-amino-acid chain: tRNA N6-adenosine threonylcarbamoyltransferase (339 aa).

2 residues coordinate Fe cation: histidine 111 and histidine 115. Substrate-binding positions include leucine 139–glycine 143, aspartate 172, glycine 185, aspartate 189, and asparagine 280. Aspartate 308 provides a ligand contact to Fe cation.

The protein belongs to the KAE1 / TsaD family. Fe(2+) is required as a cofactor.

It localises to the cytoplasm. The catalysed reaction is L-threonylcarbamoyladenylate + adenosine(37) in tRNA = N(6)-L-threonylcarbamoyladenosine(37) in tRNA + AMP + H(+). Required for the formation of a threonylcarbamoyl group on adenosine at position 37 (t(6)A37) in tRNAs that read codons beginning with adenine. Is involved in the transfer of the threonylcarbamoyl moiety of threonylcarbamoyl-AMP (TC-AMP) to the N6 group of A37, together with TsaE and TsaB. TsaD likely plays a direct catalytic role in this reaction. The sequence is that of tRNA N6-adenosine threonylcarbamoyltransferase from Bacteroides thetaiotaomicron (strain ATCC 29148 / DSM 2079 / JCM 5827 / CCUG 10774 / NCTC 10582 / VPI-5482 / E50).